Consider the following 740-residue polypeptide: Phosphoribosylformylglycinamidine synthase subunit PurL (740 aa).

H50 is a catalytic residue. The ATP site is built by Y53 and K92. Residue E94 participates in Mg(2+) binding. Residues S95–H98 and R117 each bind substrate. H96 functions as the Proton acceptor in the catalytic mechanism. D118 provides a ligand contact to Mg(2+). Q241 contributes to the substrate binding site. Residue D269 coordinates Mg(2+). E313–Q315 contacts substrate. ATP-binding residues include D495 and G532. N533 lines the Mg(2+) pocket. S535 is a binding site for substrate.

It belongs to the FGAMS family. In terms of assembly, monomer. Part of the FGAM synthase complex composed of 1 PurL, 1 PurQ and 2 PurS subunits.

The protein resides in the cytoplasm. It catalyses the reaction N(2)-formyl-N(1)-(5-phospho-beta-D-ribosyl)glycinamide + L-glutamine + ATP + H2O = 2-formamido-N(1)-(5-O-phospho-beta-D-ribosyl)acetamidine + L-glutamate + ADP + phosphate + H(+). Its pathway is purine metabolism; IMP biosynthesis via de novo pathway; 5-amino-1-(5-phospho-D-ribosyl)imidazole from N(2)-formyl-N(1)-(5-phospho-D-ribosyl)glycinamide: step 1/2. In terms of biological role, part of the phosphoribosylformylglycinamidine synthase complex involved in the purines biosynthetic pathway. Catalyzes the ATP-dependent conversion of formylglycinamide ribonucleotide (FGAR) and glutamine to yield formylglycinamidine ribonucleotide (FGAM) and glutamate. The FGAM synthase complex is composed of three subunits. PurQ produces an ammonia molecule by converting glutamine to glutamate. PurL transfers the ammonia molecule to FGAR to form FGAM in an ATP-dependent manner. PurS interacts with PurQ and PurL and is thought to assist in the transfer of the ammonia molecule from PurQ to PurL. The chain is Phosphoribosylformylglycinamidine synthase subunit PurL from Brucella abortus (strain S19).